A 317-amino-acid chain; its full sequence is MKIIFAGTPEFAAVALAALHAAGFEIPLVLTQPDRPAGRGMQLQASAVKQFALAHKIPVAQPISLRLDGKYPDVAQEAHDLLRATPHDVMVVAAYGLILPQSVLDIPPLGCLNIHASLLPRWRGAAPIHRAIEVGDEKTGITIMQMELGLDTGPMLLMESLPIAADDTTASLHDKLARLGGEMIVEALLKLEKGELTATPQPEAGANYAAKIAKEEATLDLRQSAQELARKIRAFNPFPGAMGICNGTPVKFWQAQALECSNQWPAGQVISANAQDGVVIACGDGALRVTELQKPGGKRLPAAEFIKGFALEAQRFQ.

Residue 117-120 (SLLP) coordinates (6S)-5,6,7,8-tetrahydrofolate.

The protein belongs to the Fmt family.

The enzyme catalyses L-methionyl-tRNA(fMet) + (6R)-10-formyltetrahydrofolate = N-formyl-L-methionyl-tRNA(fMet) + (6S)-5,6,7,8-tetrahydrofolate + H(+). In terms of biological role, attaches a formyl group to the free amino group of methionyl-tRNA(fMet). The formyl group appears to play a dual role in the initiator identity of N-formylmethionyl-tRNA by promoting its recognition by IF2 and preventing the misappropriation of this tRNA by the elongation apparatus. The polypeptide is Methionyl-tRNA formyltransferase (Herminiimonas arsenicoxydans).